The primary structure comprises 218 residues: Peptidyl-prolyl cis-trans isomerase FKBP7 (218 aa).

A signal peptide spans 1 to 19; it reads MNLLFRLAVFLSLWCCSDA. Asn-41 and Asn-128 each carry an N-linked (GlcNAc...) asparagine glycan. A PPIase FKBP-type domain is found at 49–141; that stretch reads GDLLNAHYDG…MFEIELYAVT (93 aa). EF-hand domains lie at 141–176 and 185–218; these read TKGP…DFEK and YQKA…HDEL. 9 residues coordinate Ca(2+): Asp-154, Asp-156, Asp-158, Gln-160, Glu-165, Asp-198, Asn-200, Asp-202, and Glu-209. The interval 197–218 is disordered; sequence NDHNGDGFISPKEYNVHQHDEL. The Prevents secretion from ER motif lies at 215–218; it reads HDEL.

Post-translationally, glycosylated. In terms of tissue distribution, expressed at highest levels in heart, lung and testis. Weakly expressed in kidney and lymph node. Little or no expression detected in brain, thymus, spleen and liver.

Its subcellular location is the endoplasmic reticulum lumen. The enzyme catalyses [protein]-peptidylproline (omega=180) = [protein]-peptidylproline (omega=0). PPIases accelerate the folding of proteins during protein synthesis. The protein is Peptidyl-prolyl cis-trans isomerase FKBP7 (Fkbp7) of Mus musculus (Mouse).